The sequence spans 187 residues: Elongation factor P (187 aa).

It belongs to the elongation factor P family.

It is found in the cytoplasm. The protein operates within protein biosynthesis; polypeptide chain elongation. Functionally, involved in peptide bond synthesis. Stimulates efficient translation and peptide-bond synthesis on native or reconstituted 70S ribosomes in vitro. Probably functions indirectly by altering the affinity of the ribosome for aminoacyl-tRNA, thus increasing their reactivity as acceptors for peptidyl transferase. This chain is Elongation factor P, found in Zymomonas mobilis subsp. mobilis (strain ATCC 31821 / ZM4 / CP4).